The sequence spans 641 residues: Epithelial sodium channel subunit beta (641 aa).

Residues 1–50 (MHVKKYLLKGLHRLQKGPGYTYKELLVWYCDNTNTHGPKRIICEGPKKKA) are Cytoplasmic-facing. Residues 51-71 (MWFVLTLLFTSLVCWQWGLFI) form a helical membrane-spanning segment. The Extracellular segment spans residues 72-533 (KTYLNWEVSV…GGQFGFWMGG (462 aa)). 9 disulfide bridges follow: cysteine 98–cysteine 273, cysteine 185–cysteine 190, cysteine 197–cysteine 204, cysteine 250–cysteine 257, cysteine 362–cysteine 449, cysteine 387–cysteine 445, cysteine 391–cysteine 441, cysteine 400–cysteine 427, and cysteine 402–cysteine 416. N-linked (GlcNAc...) asparagine glycosylation occurs at asparagine 141. Asparagine 379 carries an N-linked (GlcNAc...) asparagine glycan. A helical membrane pass occupies residues 534–554 (SVLCLIEFGEIIIDFVWITII). At 555-641 (KLVALAKSVR…IESDSEGDAI (87 aa)) the chain is on the cytoplasmic side. A disordered region spans residues 597–624 (TPGPDVEAYPHEQNPPIPGTPPPNYDSL). Positions 609–620 (QNPPIPGTPPPN) are enriched in pro residues. The short motif at 617 to 621 (PPPNY) is the PY motif; recruits WW domain-containing proteins and is thereby required for ubiquitination and inhibition of the channel by NEDD4 and NEDD4L element. Residues serine 634 and serine 636 each carry the phosphoserine modification.

The protein belongs to the amiloride-sensitive sodium channel (TC 1.A.6) family. SCNN1B subfamily. In terms of assembly, component of the heterotrimeric epithelial sodium channel (ENaC) composed of an alpha/SCNN1A, a beta/SCNN1B and a gamma/SCNN1G subunit. An additional delta/SCNN1D subunit can replace the alpha/SCNN1A subunit to form an alternative channel with specific properties. Interacts with WWP1 (via WW domains). Interacts with WWP2 (via WW domains); inhibits the channel. Interacts with the full-length immature form of PCSK9 (pro-PCSK9). Interacts (N-glycosylated) with BPIFA1; the interaction is direct and inhibits the proteolytic processing of SCNN1A and SCNN1G and the activation of ENaC. In terms of processing, ubiquitinated. Can be ubiquitinated at multiple sites and undergo monoubiquitination and polyubiquitination. Ubiquitination by NEDD4 or NEDD4L inhibits the ENaC channel through endocytosis, intracellular retention and degradation of its individual subunits. However, some studies could not confirm the ubiquitination of this subunit of the ENaC. Phosphorylated on serine and threonine residues. Aldosterone and insulin increase the basal level of phosphorylation. Post-translationally, N-glycosylated. N-glycosylation is required for interaction with BPIFA1.

The protein resides in the apical cell membrane. The protein localises to the cytoplasmic vesicle membrane. It catalyses the reaction Na(+)(in) = Na(+)(out). Originally identified and characterized by its inhibition by the diuretic drug amiloride. Functionally, this is one of the three pore-forming subunits of the heterotrimeric epithelial sodium channel (ENaC), a critical regulator of sodium balance and fluid homeostasis. ENaC operates in epithelial tissues, where it mediates the electrodiffusion of sodium ions from extracellular fluid through the apical membrane of cells, with water following osmotically. It plays a key role in maintaining sodium homeostasis through electrogenic sodium reabsorption in the kidneys. Additionally, ENaC is essential for airway surface liquid homeostasis, which is crucial for proper mucus clearance. The sequence is that of Epithelial sodium channel subunit beta from Bos taurus (Bovine).